The sequence spans 512 residues: Gasdermin-E (512 aa).

A membrane targeting domain region spans residues 1–56 (MFAKATRNFLKEVDAGGDLISVSHLNDSDKLQLLSLVTKKKRYWCWQRPKYQILSA). C45 is subject to S-(2-succinyl)cysteine. K120 participates in a covalent cross-link: Glycyl lysine isopeptide (Lys-Gly) (interchain with G-Cter in ubiquitin). S-(2-succinyl)cysteine occurs at positions 156, 168, and 180. Residue K189 forms a Glycyl lysine isopeptide (Lys-Gly) (interchain with G-Cter in ubiquitin) linkage. An S-(2-succinyl)cysteine mark is found at C235, C411, and C420.

The protein belongs to the gasdermin family. Homooligomer; homooligomeric ring-shaped pore complex containing 27-28 subunits when inserted in the membrane. Cleavage at Asp-270 by CASP3 (mature and uncleaved precursor forms) or granzyme B (GZMB) relieves autoinhibition and is sufficient to initiate pyroptosis. In terms of processing, succination by the Krebs cycle intermediate fumarate, which leads to S-(2-succinyl)cysteine residues, inhibits processing by caspases, and ability to initiate pyroptosis. Succination modification is catalyzed by a non-enzymatic reaction caused by an accumulation of fumarate. Post-translationally, ubiquitinated on Lys-120 and Lys-189 via 'Lys-48'-linked polyubiquitin chains, leading to proteasomal degradation. Deubiquitinated by USP48, leading to increased stability. Palmitoylated. As to expression, expressed in spleen, kidney, large and small intestine, testicle, stomach and by CD4(+)CD(8+) T cells in thymus. Expressed by macrophages.

The protein localises to the cell membrane. Its subcellular location is the cytoplasm. It is found in the cytosol. With respect to regulation, the full-length protein before cleavage is inactive: intramolecular interactions between N- and C-terminal domains mediate autoinhibition in the absence of activation signal. The intrinsic pyroptosis-inducing activity is carried by the released N-terminal moiety (Gasdermin-E, N-terminal) following cleavage by CASP3 or granzyme B (GZMB). Activated by NLRP1 in the absence of GSDMD expression: NLRP1 cleaves and activates CASP8, promoting downstream activation of CASP3 and subsequent activation of GSDME. Functionally, precursor of a pore-forming protein that converts non-inflammatory apoptosis to pyroptosis. This form constitutes the precursor of the pore-forming protein: upon cleavage, the released N-terminal moiety (Gasdermin-E, N-terminal) binds to membranes and forms pores, triggering pyroptosis. Pore-forming protein produced by cleavage by CASP3 or granzyme B (GZMB), which converts non-inflammatory apoptosis to pyroptosis or promotes granzyme-mediated pyroptosis, respectively. After cleavage, moves to the plasma membrane, homooligomerizes within the membrane and forms pores of 10-15 nanometers (nm) of inner diameter, allowing the release of mature interleukins (IL1B and IL16) and triggering pyroptosis. Binds to inner leaflet lipids, bisphosphorylated phosphatidylinositols, such as phosphatidylinositol (4,5)-bisphosphate. Cleavage by CASP3 switches CASP3-mediated apoptosis induced by TNF or danger signals, such as chemotherapy drugs, to pyroptosis. Mediates secondary necrosis downstream of the mitochondrial apoptotic pathway and CASP3 activation as well as in response to viral agents. Exhibits bactericidal activity. Cleavage by GZMB promotes tumor suppressor activity by triggering robust anti-tumor immunity. Suppresses tumors by mediating granzyme-mediated pyroptosis in target cells of natural killer (NK) cells: cleavage by granzyme B (GZMB), delivered to target cells from NK-cells, triggers pyroptosis of tumor cells and tumor suppression. May play a role in the p53/TP53-regulated cellular response to DNA damage. This chain is Gasdermin-E, found in Mus musculus (Mouse).